A 454-amino-acid chain; its full sequence is tRNA modification GTPase MnmE (454 aa).

Arginine 23, glutamate 80, and lysine 120 together coordinate (6S)-5-formyl-5,6,7,8-tetrahydrofolate. Residues 216 to 377 (TIKIVIAGPP…LKNKILEITT (162 aa)) form the TrmE-type G domain. Asparagine 226 provides a ligand contact to K(+). GTP is bound by residues 226-231 (NVGKSS), 245-251 (TNIPGTT), and 270-273 (DTAG). Serine 230 is a Mg(2+) binding site. Threonine 245, isoleucine 247, and threonine 250 together coordinate K(+). Residue threonine 251 coordinates Mg(2+). Position 454 (lysine 454) interacts with (6S)-5-formyl-5,6,7,8-tetrahydrofolate.

It belongs to the TRAFAC class TrmE-Era-EngA-EngB-Septin-like GTPase superfamily. TrmE GTPase family. In terms of assembly, homodimer. Heterotetramer of two MnmE and two MnmG subunits. Requires K(+) as cofactor.

It localises to the cytoplasm. Exhibits a very high intrinsic GTPase hydrolysis rate. Involved in the addition of a carboxymethylaminomethyl (cmnm) group at the wobble position (U34) of certain tRNAs, forming tRNA-cmnm(5)s(2)U34. This is tRNA modification GTPase MnmE from Buchnera aphidicola subsp. Cinara cedri (strain Cc).